The following is a 509-amino-acid chain: Cobyric acid synthase (509 aa).

Residues 262–459 (ELKVGIIKLP…IHGIFENDDW (198 aa)) form the GATase cobBQ-type domain. Cys-343 functions as the Nucleophile in the catalytic mechanism. His-451 is an active-site residue.

This sequence belongs to the CobB/CobQ family. CobQ subfamily.

It participates in cofactor biosynthesis; adenosylcobalamin biosynthesis. Functionally, catalyzes amidations at positions B, D, E, and G on adenosylcobyrinic A,C-diamide. NH(2) groups are provided by glutamine, and one molecule of ATP is hydrogenolyzed for each amidation. The chain is Cobyric acid synthase from Prochlorococcus marinus subsp. pastoris (strain CCMP1986 / NIES-2087 / MED4).